The primary structure comprises 202 residues: IMP cyclohydrolase (202 aa).

This sequence belongs to the archaeal IMP cyclohydrolase family.

It catalyses the reaction IMP + H2O = 5-formamido-1-(5-phospho-D-ribosyl)imidazole-4-carboxamide. The protein operates within purine metabolism; IMP biosynthesis via de novo pathway; IMP from 5-formamido-1-(5-phospho-D-ribosyl)imidazole-4-carboxamide: step 1/1. Catalyzes the cyclization of 5-formylamidoimidazole-4-carboxamide ribonucleotide to IMP. The protein is IMP cyclohydrolase of Methanothermobacter thermautotrophicus (strain ATCC 29096 / DSM 1053 / JCM 10044 / NBRC 100330 / Delta H) (Methanobacterium thermoautotrophicum).